The sequence spans 130 residues: MLIDMLKGKIHRATVTQADLEYVGSITIDETLMEASGILEYEKVQIADVNNGARFETYVIAGPRDSGVICLNGATARCASVGDKVIIMNYAQFEPEEAKHAKPYVVLVDDENRLTKRVRYEKHGLLAEEL.

Serine 25 serves as the catalytic Schiff-base intermediate with substrate; via pyruvic acid. At serine 25 the chain carries Pyruvic acid (Ser). Substrate is bound at residue threonine 57. Tyrosine 58 functions as the Proton donor in the catalytic mechanism. Residue 73-75 coordinates substrate; that stretch reads GAT.

This sequence belongs to the PanD family. Heterooctamer of four alpha and four beta subunits. The cofactor is pyruvate. Post-translationally, is synthesized initially as an inactive proenzyme, which is activated by self-cleavage at a specific serine bond to produce a beta-subunit with a hydroxyl group at its C-terminus and an alpha-subunit with a pyruvoyl group at its N-terminus.

Its subcellular location is the cytoplasm. It catalyses the reaction L-aspartate + H(+) = beta-alanine + CO2. Its pathway is cofactor biosynthesis; (R)-pantothenate biosynthesis; beta-alanine from L-aspartate: step 1/1. Its function is as follows. Catalyzes the pyruvoyl-dependent decarboxylation of aspartate to produce beta-alanine. This chain is Aspartate 1-decarboxylase, found in Lactiplantibacillus plantarum (strain ATCC BAA-793 / NCIMB 8826 / WCFS1) (Lactobacillus plantarum).